The sequence spans 152 residues: Transcription factor ATOH7 (152 aa).

One can recognise a bHLH domain in the interval 40–92 (RRRLAANARERRRMQGLNTAFDRLRRVVPQWGQDKKLSKYETLQMALSYIMAL).

In terms of assembly, forms a heterodimer with TCF3 isoform E47; interaction may be required for DNA-binding in certain situations.

The protein resides in the nucleus. Its subcellular location is the perikaryon. It localises to the cell projection. The protein localises to the axon. Transcription factor that binds to DNA at the consensus sequence 5'-CAG[GC]TG-3'. Dimerization with TCF3 isoform E47 may be required in certain situations. Binds to gene promoters and enhancer elements, and thereby regulates a transcriptional program of retinal ganglion cell (RGC) determinant genes. Although the exact mechanism is not certain, retinal transcription regulation by ATOH7 has a role in RGC determination and survival, photoreceptor population development, targeting of RGC axons to the optic nerve and development of the retino-hypothalamic tract. Binds to its own promoter and enhancer sequences, suggesting autoregulation of ATOH7 transcription. Required for retinal circadian rhythm photoentrainment. Plays a role in brainstem auditory signaling and binaural processing. This is Transcription factor ATOH7 from Homo sapiens (Human).